Consider the following 507-residue polypeptide: Histone-lysine N-methyltransferase set-18 (507 aa).

Positions 49, 52, 65, 68, 74, 78, 86, and 90 each coordinate Zn(2+). An MYND-type zinc finger spans residues C49–C90.

This sequence belongs to the class V-like SAM-binding methyltransferase superfamily. Histone-lysine methyltransferase family. As to expression, expressed in pharyngeal and body wall muscles.

The enzyme catalyses L-lysyl(36)-[histone H3] + 2 S-adenosyl-L-methionine = N(6),N(6)-dimethyl-L-lysyl(36)-[histone H3] + 2 S-adenosyl-L-homocysteine + 2 H(+). In terms of biological role, histone methyltransferase. Specifically methylates 'Lys-36' of histone H3, inducing di-methylation. Plays a role in modulating lifespan and oxidative stress resistance, in a manner dependent upon daf-16/Forkhead box protein O and the Insulin/IGF-1-like signaling (IIS) mediated pathway. Represses transcription of daf-16 isoform a, perhaps by methylating histone H3 at the daf-16 promoter, which in turn leads to recruitment of histone deacetylases and thus modulation of expression. The chain is Histone-lysine N-methyltransferase set-18 from Caenorhabditis elegans.